We begin with the raw amino-acid sequence, 257 residues long: tRNA pseudouridine synthase A (257 aa).

Asp53 serves as the catalytic Nucleophile. Substrate is bound at residue Tyr111.

This sequence belongs to the tRNA pseudouridine synthase TruA family. In terms of assembly, homodimer.

It catalyses the reaction uridine(38/39/40) in tRNA = pseudouridine(38/39/40) in tRNA. Formation of pseudouridine at positions 38, 39 and 40 in the anticodon stem and loop of transfer RNAs. The sequence is that of tRNA pseudouridine synthase A from Xylella fastidiosa (strain M12).